A 507-amino-acid chain; its full sequence is Cytochrome P450 4A14 (507 aa).

A propeptide spans 1-4 (removed in mature form); it reads MGFS. Glu-318 is a heme binding site. At Ser-437 the chain carries Phosphoserine. Heme is bound at residue Cys-454.

It belongs to the cytochrome P450 family. The cofactor is heme.

The protein localises to the endoplasmic reticulum membrane. It is found in the microsome membrane. It catalyses the reaction an omega-methyl-long-chain fatty acid + reduced [NADPH--hemoprotein reductase] + O2 = an omega-hydroxy-long-chain fatty acid + oxidized [NADPH--hemoprotein reductase] + H2O + H(+). It carries out the reaction dodecanoate + reduced [NADPH--hemoprotein reductase] + O2 = (11R)-hydroxydodecanoate + oxidized [NADPH--hemoprotein reductase] + H2O + H(+). The catalysed reaction is dodecanoate + reduced [NADPH--hemoprotein reductase] + O2 = 12-hydroxydodecanoate + oxidized [NADPH--hemoprotein reductase] + H2O + H(+). The enzyme catalyses tetradecanoate + reduced [NADPH--hemoprotein reductase] + O2 = 14-hydroxytetradecanoate + oxidized [NADPH--hemoprotein reductase] + H2O + H(+). It participates in lipid metabolism; fatty acid metabolism. Functionally, a cytochrome P450 monooxygenase that catalyzes omega and omega-1 hydroxylation of saturated fatty acids. Exhibits preferential omega versus omega-1 regioselectivity and (R) versus (S) stereoselectivity for hydroxylation of dodecanoic (lauric) acid. Mechanistically, uses molecular oxygen inserting one oxygen atom into a substrate, and reducing the second into a water molecule, with two electrons provided by NADPH via cytochrome P450 reductase (CPR; NADPH-ferrihemoprotein reductase). The polypeptide is Cytochrome P450 4A14 (Rattus norvegicus (Rat)).